The primary structure comprises 261 residues: CD40 ligand (261 aa).

Over 1–22 (MIETYNQPVPRSAATGPPVSMK) the chain is Cytoplasmic. A helical; Signal-anchor for type II membrane protein membrane pass occupies residues 23–43 (IFMYLLTVFLITQMIGSALFA). Residues 44 to 261 (VYLHRRLDKI…GFTSFGLLKL (218 aa)) lie on the Extracellular side of the membrane. Residues 122–261 (IAAHVISEAS…GFTSFGLLKL (140 aa)) form the THD domain. C178 and C218 are joined by a disulfide. N240 carries N-linked (GlcNAc...) asparagine glycosylation.

Belongs to the tumor necrosis factor family. Homotrimer. Interacts with CD28. CD40 ligand, soluble form: Exists as either a monomer or a homotrimer. Forms a ternary complex between CD40 and integrins for CD40-CD40LG signaling. In terms of processing, the soluble form derives from the membrane form by proteolytic processing.

The protein resides in the cell membrane. The protein localises to the cell surface. Its subcellular location is the secreted. Cytokine that acts as a ligand to CD40/TNFRSF5. Costimulates T-cell proliferation and cytokine production. Its cross-linking on T-cells generates a costimulatory signal which enhances the production of IL4 and IL10 in conjunction with the TCR/CD3 ligation and CD28 costimulation. Induces the activation of NF-kappa-B. Induces the activation of kinases MAPK8 and PAK2 in T-cells. Mediates B-cell proliferation in the absence of co-stimulus as well as IgE production in the presence of IL4. Involved in immunoglobulin class switching. Functionally, acts as a ligand for integrins, specifically ITGA5:ITGB1 and ITGAV:ITGB3; both integrins and the CD40 receptor are required for activation of CD40-CD40LG signaling, which have cell-type dependent effects, such as B-cell activation, NF-kappa-B signaling and anti-apoptotic signaling. The chain is CD40 ligand (CD40LG) from Callithrix jacchus (White-tufted-ear marmoset).